A 424-amino-acid chain; its full sequence is Serine--tRNA ligase (424 aa).

230-232 (TAE) contacts L-serine. Residue 261 to 263 (RSE) participates in ATP binding. Position 284 (Glu-284) interacts with L-serine. 348–351 (EISS) contacts ATP. L-serine is bound at residue Ser-384.

The protein belongs to the class-II aminoacyl-tRNA synthetase family. Type-1 seryl-tRNA synthetase subfamily. Homodimer. The tRNA molecule binds across the dimer.

The protein resides in the cytoplasm. It catalyses the reaction tRNA(Ser) + L-serine + ATP = L-seryl-tRNA(Ser) + AMP + diphosphate + H(+). The catalysed reaction is tRNA(Sec) + L-serine + ATP = L-seryl-tRNA(Sec) + AMP + diphosphate + H(+). Its pathway is aminoacyl-tRNA biosynthesis; selenocysteinyl-tRNA(Sec) biosynthesis; L-seryl-tRNA(Sec) from L-serine and tRNA(Sec): step 1/1. Its function is as follows. Catalyzes the attachment of serine to tRNA(Ser). Is also able to aminoacylate tRNA(Sec) with serine, to form the misacylated tRNA L-seryl-tRNA(Sec), which will be further converted into selenocysteinyl-tRNA(Sec). The chain is Serine--tRNA ligase from Streptococcus pneumoniae serotype 19F (strain G54).